We begin with the raw amino-acid sequence, 259 residues long: Bidirectional sugar transporter SWEET4 (259 aa).

The Extracellular portion of the chain corresponds to 1–10; the sequence is MVSPDTIRTA. Residues 10–94 enclose the MtN3/slv 1 domain; sequence AIGVVGNGTA…TYIALFLAFS (85 aa). Residues 11-31 form a helical membrane-spanning segment; it reads IGVVGNGTALVLFLSPVPTFI. Residues 32 to 44 are Cytoplasmic-facing; sequence RIWKKGSVEQYSA. A helical transmembrane segment spans residues 45 to 65; that stretch reads VPYVATLLNCMMWVLYGLPAV. Over 66-77 the chain is Extracellular; sequence HPHSMLVITING. Asn-76 is a glycosylation site (N-linked (GlcNAc...) asparagine). The chain crosses the membrane as a helical span at residues 78-98; that stretch reads TGMAIELTYIALFLAFSLGAV. The Cytoplasmic portion of the chain corresponds to 99-101; sequence RRR. The helical transmembrane segment at 102 to 122 threads the bilayer; sequence VLLLLAAEVAFVAAVAALVLN. Residues 123 to 131 are Extracellular-facing; that stretch reads LAHTHERRS. Residues 132–152 form a helical membrane-spanning segment; sequence MIVGILCVLFGTGMYAAPLSV. Positions 133-217 constitute a MtN3/slv 2 domain; that stretch reads IVGILCVLFG…ILYAIYYKST (85 aa). The Cytoplasmic portion of the chain corresponds to 153-165; the sequence is MKMVIQTKSVEYM. A helical transmembrane segment spans residues 166–186; it reads PLFLSLASLVNGICWTAYALI. Residues 187–191 are Extracellular-facing; sequence RFDLY. Residues 192 to 212 traverse the membrane as a helical segment; that stretch reads ITIPNGLGVMFAVAQLILYAI. Residues 213–259 lie on the Cytoplasmic side of the membrane; sequence YYKSTQQIIEARKRKEADHVAMTDVVVDSAKNNPSSGAAAAAANGRY.

This sequence belongs to the SWEET sugar transporter family. Forms homooligomers and/or heterooligomers.

Its subcellular location is the cell membrane. Its function is as follows. Mediates both low-affinity uptake and efflux of sugar across the plasma membrane. The protein is Bidirectional sugar transporter SWEET4 (SWEET4) of Oryza sativa subsp. indica (Rice).